A 712-amino-acid polypeptide reads, in one-letter code: MVQKNEHQGGQSQHSLFAAGPTGEERRRVQWLTAELERHNHLYHTLDRPEISDDQFDALFRELQDLETRWPELRSLHSPTLRVGGGLLEGLAKKAHSLQMYGLDNVFSAGQWQEFAERMARAWGGDVNGPLPESFWCDPKLDGLALEIIYADGVLQEALTRGDGEVGEVVTDAVRTIRTVPLRLAGPGPFPARLEVRGEVVMYKNDFAVLNEKQEALGLKTFANPRNAAAGTLRQLDTAIIGSRPLRFLAYSLGQALWTPAPVCLLQSEVMSRLREYGFLTPPDGRLCSSVAEVEEYAQWVREHRAAFPMEIDGAVAKLDNLEAQQALGFTARAPRFAVAFKFPAELAQTLLKDIEIQVGRTGVLTPVAMLEPVSVGGVMVSRATLHNEDEIRNRDVRVGDTVMVRRAGDVIPEVVGPVLEKRPENAREYVFPHTCPACGQPAYREEGEAAWRCENMACSAIRLRAITHFVSKAGLDIAGVGQKWIEQLVTSGRVQSPADLFTLTVQELLGFERMGEVLAHKFVDALARAVHSATLPRLISALGIRHVGEQTARTLALHFETLDELENAGAETLLSLPDVGPEVASSIHNFFNSPANREQLERFRALGLWPRGGRSGGGSSGSTGEGGLASGPLAGKNILFTGTLSMPRSEAEKLAETAGATPLGGVSKKLDYLVAGEKAGSKLEKAQALGVTVLTEEEFMTMLREAKAASE.

The segment at 1–22 is disordered; sequence MVQKNEHQGGQSQHSLFAAGPT. NAD(+) contacts are provided by residues 53–57 and Asp138; that span reads DDQFD. The N6-AMP-lysine intermediate role is filled by Lys140. Residues Arg161, Glu199, Lys318, and Lys342 each contribute to the NAD(+) site. Positions 436, 439, 454, and 459 each coordinate Zn(2+). Residues 612 to 631 are disordered; it reads RGGRSGGGSSGSTGEGGLAS. Residues 614-630 show a composition bias toward gly residues; it reads GRSGGGSSGSTGEGGLA. The BRCT domain occupies 629–712; the sequence is LASGPLAGKN…MLREAKAASE (84 aa).

Belongs to the NAD-dependent DNA ligase family. LigA subfamily. Mg(2+) is required as a cofactor. Mn(2+) serves as cofactor.

The enzyme catalyses NAD(+) + (deoxyribonucleotide)n-3'-hydroxyl + 5'-phospho-(deoxyribonucleotide)m = (deoxyribonucleotide)n+m + AMP + beta-nicotinamide D-nucleotide.. Its function is as follows. DNA ligase that catalyzes the formation of phosphodiester linkages between 5'-phosphoryl and 3'-hydroxyl groups in double-stranded DNA using NAD as a coenzyme and as the energy source for the reaction. It is essential for DNA replication and repair of damaged DNA. This chain is DNA ligase, found in Desulfovibrio desulfuricans (strain ATCC 27774 / DSM 6949 / MB).